A 977-amino-acid polypeptide reads, in one-letter code: Ephrin type-A receptor 1 (977 aa).

A signal peptide spans 1 to 26 (MERRWPLGLALLLLLLCAPLPPGARA). The Extracellular portion of the chain corresponds to 27–548 (EEVTLMDTST…PVSRSLTGGE (522 aa)). In terms of domain architecture, Eph LBD spans 28–210 (EVTLMDTSTA…FYQRCAETVH (183 aa)). 2 Fibronectin type-III domains span residues 333–446 (PPSA…MGHA) and 448–539 (SLSG…TSPP). Residues N415 and N479 are each glycosylated (N-linked (GlcNAc...) asparagine). A helical membrane pass occupies residues 549 to 569 (IVAVIFGLLLGIALLIGIYVF). Topologically, residues 570–977 (RSRRGQRQRQ…ILCSIQGFKD (408 aa)) are cytoplasmic. Phosphotyrosine; by autocatalysis is present on residues Y600 and Y606. Positions 625 to 885 (LIVDTVIGEG…QLQAHLEQLL (261 aa)) constitute a Protein kinase domain. Residues 631-639 (IGEGEFGEV) and K657 contribute to the ATP site. Catalysis depends on D750, which acts as the Proton acceptor. At Y782 the chain carries Phosphotyrosine; by autocatalysis. A phosphoserine mark is found at S907 and S911. Positions 914–977 (IPYRSVSEWL…ILCSIQGFKD (64 aa)) constitute an SAM domain. A PDZ-binding motif is present at residues 975-977 (FKD).

The protein belongs to the protein kinase superfamily. Tyr protein kinase family. Ephrin receptor subfamily. As to quaternary structure, homodimer. Forms a signaling complex with LCK; PTK2B/PYK2 and PI3-kinase upon activation by EFNA1; regulates T-lymphocytes migration. Interacts (via SAM domain) with ILK (via ANK repeats); stimulated by EFNA1 but independent of the kinase activity of EPHA1. Interacts (kinase activity-dependent) with PTK2/FAK1. Phosphorylated. Autophosphorylation is stimulated by its ligand EFNA1. Post-translationally, ubiquitinated. In terms of tissue distribution, preferentially expressed in epithelial cells including skin, kidney, liver and thymus. Expressed in myogenic progenitor cells.

The protein localises to the cell membrane. The catalysed reaction is L-tyrosyl-[protein] + ATP = O-phospho-L-tyrosyl-[protein] + ADP + H(+). In terms of biological role, receptor tyrosine kinase which binds promiscuously membrane-bound ephrin-A family ligands residing on adjacent cells, leading to contact-dependent bidirectional signaling into neighboring cells. The signaling pathway downstream of the receptor is referred to as forward signaling while the signaling pathway downstream of the ephrin ligand is referred to as reverse signaling. Binds with a low affinity EFNA3 and EFNA4 and with a high affinity to EFNA1 which most probably constitutes its cognate/functional ligand. Upon activation by EFNA1 induces cell attachment to the extracellular matrix inhibiting cell spreading and motility through regulation of ILK and downstream RHOA and RAC. Also plays a role in angiogenesis and regulates cell proliferation. May play a role in apoptosis. The sequence is that of Ephrin type-A receptor 1 (Epha1) from Mus musculus (Mouse).